A 431-amino-acid polypeptide reads, in one-letter code: MITDRVSDYLEKIEKSDINAFIDLNGERVLKEAKDLEKNEKLKNKSLYGKIIAVKSNINVEGYKISCASKTLDNYTGTYDATVIKKLRSEGALIIGMTNMDEFASGSSGETSYYGPTKNPKALDRIPGGSSSGSAAAVSADLCDMALGSDTGGSIRNPASHCGVVGFKPTYGVVSRQGLCDLAMSFDQIGPLTKTAEDSLNLTNVIKGLDLSNTTSLKTPKFEKKEIKDYKIGVVREFMDVTDEKIRNEIEKGIEVFRDLGCEIVDLSYKYIDLALPTYYLINYVEFYSATRKYDGRRFGEVIEEACGEEVLRRILIGKHISEQEFSGKYYKKALQARKEMKKEMIGLFNSVDLIVGPTVPKLPHKIGEELSPMEMYAYDVLTVLTNICGICSGVVGCGNINGIPVGLQIQGASLDDEKVLSAMIEFENNY.

Residues Lys55 and Ser130 each act as charge relay system in the active site. The active-site Acyl-ester intermediate is Ser154.

Belongs to the amidase family. GatA subfamily. In terms of assembly, heterotrimer of A, B and C subunits.

It carries out the reaction L-glutamyl-tRNA(Gln) + L-glutamine + ATP + H2O = L-glutaminyl-tRNA(Gln) + L-glutamate + ADP + phosphate + H(+). Its function is as follows. Allows the formation of correctly charged Gln-tRNA(Gln) through the transamidation of misacylated Glu-tRNA(Gln) in organisms which lack glutaminyl-tRNA synthetase. The reaction takes place in the presence of glutamine and ATP through an activated gamma-phospho-Glu-tRNA(Gln). This is Glutamyl-tRNA(Gln) amidotransferase subunit A from Methanococcus vannielii (strain ATCC 35089 / DSM 1224 / JCM 13029 / OCM 148 / SB).